A 327-amino-acid polypeptide reads, in one-letter code: MRILVNGAGVAGLTVAWQLYRHGFRVTLAERAGTVGAGASGFAGGMLAPWCERESAEEPVLTLGRLAADWWEAALPGHVHRRGTLVVAGGRDTGELDRFSRRTSGWEWLDEVAIAALEPDLAGRFRRALFFRQEAHLDPRQALAALAAGLEDARMRLTLGVVGESDVDHDRVVDCTGAAQIGRLPGLRGVRGEMLCVETTEVSLSRPVRLLHPRHPIYIVPRDKNRFMVGATMIESDDGGPITARSLMELLNAAYAMHPAFGEARVTETGAGVRPAYPDNLPRVTQEGRTLHVNGLYRHGFLLAPAMAGEVARRLLTEQGQPERRAS.

It functions in the pathway cofactor biosynthesis; thiamine diphosphate biosynthesis. Its function is as follows. May have amino acid oxidase activity in the biosynthesis of thiazole when cysteine gives its thiol group to be inserted into the thiazole molecule and the rest of the molecule is deaminated to give pyruvic acid and ammonia. The sequence is that of Putative thiamine biosynthesis oxidoreductase ThiO (thiO) from Rhizobium etli (strain ATCC 51251 / DSM 11541 / JCM 21823 / NBRC 15573 / CFN 42).